The primary structure comprises 2641 residues: Inverse autotransporter adhesin YeeJ (2641 aa).

Positions 1 to 25 are cleaved as a signal peptide; the sequence is MGIKLRRLTAGICLITQLVFPMAAA. The LysM domain maps to 50 to 98; the sequence is VPYTLGALESAQSVAERFGISVAELRKLNQFRTFARGFDNVRQGDELDV. Residues 125–400 form an inverse autotransporter region; the sequence is TSQQIGSLLA…SRFDLVDRNN (276 aa). The interval 513-605 is invasin 3 domain; it reads QKDSSVSLSS…GVDAAKAPAV (93 aa). Big-1 domains follow at residues 617–711, 721–815, 822–913, 920–1017, 1024–1116, 1123–1220, 1227–1319, 1326–1423, 1430–1523, 1531–1633, 1641–1734, 1741–1837, 1844–1941, 1948–2032, 2048–2141, 2142–2235, and 2244–2336; these read HSSI…AGFI, IATL…VSFV, QVDL…VIFI, ALTL…MTFV, VVVL…VNIA, QVTL…VTFV, LVVL…VHFI, IIEL…SINV, HLTL…VTYV, EISL…VNFI, QVNL…VTLI, KLAS…PTEV, ITSL…VIDQ, KLTL…IVKV, and VASF…ITLV. The segment at 2538-2641 is C-type lectin domain; that stretch reads KSWWVNAGDA…FAYATCYKNL (104 aa).

The protein belongs to the intimin/invasin family.

The protein localises to the cell outer membrane. Its function is as follows. A probable inverse autotransporter, it may be involved in biofilm formation and cell adhesion. May bind peptidoglycan via its LysM domain. The protein is Inverse autotransporter adhesin YeeJ (yeeJ) of Escherichia coli O157:H7.